A 280-amino-acid polypeptide reads, in one-letter code: Feruloyl esterase 1 (280 aa).

A signal peptide spans 1–20; the sequence is MKAFATRALAFSVAAGQALA. Disulfide bonds link Cys-49-Cys-278, Cys-111-Cys-114, and Cys-247-Cys-254. Residue Asn-99 is glycosylated (N-linked (GlcNAc...) asparagine). The active-site Nucleophile is the Ser-153. Residue Asp-214 is the Charge relay system of the active site. His-267 (charge relay system) is an active-site residue.

It belongs to the AB hydrolase superfamily. FaeA family. Glycosylated.

It localises to the secreted. It carries out the reaction feruloyl-polysaccharide + H2O = ferulate + polysaccharide.. With respect to regulation, metal or basic ions Mn(2+), Ni(+), Mg(2+), and NH(4)(+) decrease the activity by 4.4% to 14.1%. The enzymatic activity is inhibited by Zn(2+) at a low concentration (1 mM) but not a high concentration (5 mM). Loses about a quarter of activity by the addition of 1 mM of Cu(2+) or Fe(3+) and activity is completely suppressed when the concentration was up to 5 mM. Low concentrations (0.25 and 0.5 M) of NaCl improve the activity by 5.6 % or 8.3%, respectively. Its function is as follows. Involved in degradation of plant cell walls. Hydrolyzes the feruloyl-arabinose ester bond in arabinoxylans, and the feruloyl-galactose ester bond in pectin. In Penicillium parvum (Eupenicillium parvum), this protein is Feruloyl esterase 1.